The sequence spans 164 residues: Thiol peroxidase (164 aa).

A Thioredoxin domain is found at 18–163 (INEGDFAPDF…FDAALAAYKN (146 aa)). Catalysis depends on cysteine 60, which acts as the Cysteine sulfenic acid (-SOH) intermediate. Cysteine 60 and cysteine 93 are disulfide-bonded.

The protein belongs to the peroxiredoxin family. Tpx subfamily. Homodimer.

The enzyme catalyses a hydroperoxide + [thioredoxin]-dithiol = an alcohol + [thioredoxin]-disulfide + H2O. Functionally, thiol-specific peroxidase that catalyzes the reduction of hydrogen peroxide and organic hydroperoxides to water and alcohols, respectively. Plays a role in cell protection against oxidative stress by detoxifying peroxides. The polypeptide is Thiol peroxidase (Staphylococcus aureus (strain Mu50 / ATCC 700699)).